The following is a 217-amino-acid chain: MTPRSLVRIVGVVVATTLALVSAPAGGRAAHADPCSDIAVVFARGTHQASGLGDVGEAFVDSLTSQVGGRSIGVYAVNYPASDDYRASASNGSDDASAHIQRTVASCPNTRIVLGGYSQGATVIDLSTSAMPPAVADHVAAVALFGEPSSGFSSMLWGGGSLPTIGPLYSSKTINLCAPDDPICTGGGNIMAHVSYVQSGMTSQAATFAANRLDHAG.

The N-terminal stretch at 1 to 32 (MTPRSLVRIVGVVVATTLALVSAPAGGRAAHA) is a signal peptide. Cysteine 35 and cysteine 107 are disulfide-bonded. Serine 118 functions as the Nucleophile in the catalytic mechanism. Cysteine 177 and cysteine 184 are oxidised to a cystine. The active site involves aspartate 181. The Proton donor/acceptor role is filled by histidine 193.

The protein belongs to the cutinase family.

The protein resides in the secreted. The enzyme catalyses a fatty acid ester + H2O = an aliphatic alcohol + a fatty acid + H(+). Functionally, shows esterase activity, with a preference for short- and medium-chain fatty acids. The polypeptide is Carboxylesterase Culp1 (Mycobacterium bovis (strain ATCC BAA-935 / AF2122/97)).